A 468-amino-acid chain; its full sequence is Glutamate--tRNA ligase (468 aa).

Positions 12-22 (PSPTGFIHLGN) match the 'HIGH' region motif. The short motif at 244–248 (KMSKR) is the 'KMSKS' region element. Lys-247 lines the ATP pocket.

Belongs to the class-I aminoacyl-tRNA synthetase family. Glutamate--tRNA ligase type 1 subfamily. As to quaternary structure, monomer.

The protein resides in the cytoplasm. The enzyme catalyses tRNA(Glu) + L-glutamate + ATP = L-glutamyl-tRNA(Glu) + AMP + diphosphate. Its function is as follows. Catalyzes the attachment of glutamate to tRNA(Glu) in a two-step reaction: glutamate is first activated by ATP to form Glu-AMP and then transferred to the acceptor end of tRNA(Glu). This Polynucleobacter asymbioticus (strain DSM 18221 / CIP 109841 / QLW-P1DMWA-1) (Polynucleobacter necessarius subsp. asymbioticus) protein is Glutamate--tRNA ligase.